The following is a 151-amino-acid chain: Protein SprT-like (151 aa).

In terms of domain architecture, SprT-like spans 6–147 (LQRMVENLSE…GHCNGKLRMK (142 aa)). His-67 serves as a coordination point for Zn(2+). Glu-68 is a catalytic residue. His-71 contacts Zn(2+).

The protein belongs to the SprT family. Requires Zn(2+) as cofactor.

It localises to the cytoplasm. In Staphylococcus aureus (strain Mu3 / ATCC 700698), this protein is Protein SprT-like.